A 722-amino-acid polypeptide reads, in one-letter code: Delta-like protein 1 (722 aa).

Residues 1–17 (MGRRSALALAVVSALLC) form the signal peptide. Over 18-545 (QVWSSGVFEL…MESQGGPFPW (528 aa)) the chain is Extracellular. The 45-residue stretch at 176 to 220 (FVCDEHYYGEGCSVFCRPRDDAFGHFTCGDRGEKMCDPGWKGQYC) folds into the DSL domain. 27 disulfide bridges follow: C178–C187, C191–C203, C211–C220, C225–C236, C229–C242, C244–C253, C256–C267, C262–C273, C275–C284, C291–C303, C297–C313, C315–C324, C331–C342, C336–C351, C353–C362, C369–C380, C374–C390, C392–C401, C408–C419, C413–C428, C430–C439, C446–C457, C451–C466, C468–C477, C484–C495, C489–C504, and C506–C515. EGF-like domains are found at residues 225–253 (CLPG…GRYC), 256–284 (CIRY…GLFC), and 291–324 (CTHH…GANC). The region spanning 331-362 (CAPSPCKNGASCTDLEDSFSCTCPPGFYGKVC) is the EGF-like 4; calcium-binding domain. 2 EGF-like domains span residues 369-401 (CADG…GFNC) and 408-439 (CGSS…GRYC). An EGF-like 7; calcium-binding domain is found at 446–477 (CASSPCANGGTCRDSVNDFSCTCPPGYTGKNC). N476 carries N-linked (GlcNAc...) asparagine glycosylation. Residues 484 to 515 (CEHAPCHNGATCHQRGQRYMCECAQGYGGPNC) enclose the EGF-like 8 domain. A helical transmembrane segment spans residues 546 to 568 (VAVCAGVVLVLLLLLGCAAVVVC). Over 569 to 722 (VRLKLQKHQP…KDECVIATEV (154 aa)) the chain is Cytoplasmic. A Glycyl lysine isopeptide (Lys-Gly) (interchain with G-Cter in ubiquitin) cross-link involves residue K613. The residue at position 638 (T638) is a Phosphothreonine. The span at 655–664 (RDTHSKRDTK) shows a compositional bias: basic and acidic residues. Residues 655 to 697 (RDTHSKRDTKCQSQSSAGEEKIAPTLRGGEIPDRKRPESVYST) form a disordered region. Phosphoserine; by PKB is present on S693. S696 carries the phosphoserine modification. An interaction with MAGI1 region spans residues 719 to 722 (ATEV).

In terms of assembly, homodimer. Interacts with TJP1. Interacts with MMP14; inhibits DLL1-induced Notch signaling. Interacts with MAGI1 (via PDZ domain); forms a complex with CTNNB1 and CDH2 and promotes recruitment to the adherens junction and stabilization on the cell surface. Interacts with PSEN1; undergoes a presenilin-dependent gamma-secretase cleavage that releases a Dll1-intracellular form. Interacts with MFAP5. Interacts with MIB1. Interacts with NEURL1B; leads to ubiquitination. Interacts with NEURL1. Interacts with SYNJ2BP; enhances DLL1 protein stability, and promotes Notch signaling in endothelial cells. Interacts with MAGI1, MAGI2, MAGI3 and MPDZ. Interacts (via ubiquitin) with EPN1 (via IUM domain); binding with NOTCH1 attached to neighboring cell, promotes ligand ubiquitination and EPN1 interaction, leading to NECD transendocytosis and Notch signaling. Interacts with NOTCH1. Ubiquitinated by MIB (MIB1 or MIB2), leading to its endocytosis and subsequent degradation. Ubiquitinated; promotes recycling back to the plasma membrane and confers a strong affinity for NOTCH1. Multi-ubiquitination of Lys-613 by MIB1 promotes both cis and trans-interaction with NOTCH1, as well as activation of Notch signaling. Ubiquitinated by NEURL1B. In terms of processing, phosphorylated in a membrane association-dependent manner. Phosphorylation at Ser-696 requires the presence of Ser-693, whereas phosphorylation at Thr-638 and Ser-693 occurs independently of the other sites. Phosphorylation is required for full ligand activity in vitro and affects surface presentation, ectodomain shedding, and endocytosis. Post-translationally, cleaved by MMP14; negatively regulates DLL1-induced Notch signaling in HPCs, modulating B-lymphocyte differentiation in bone marrow. Undergoes two consecutive processing events: a shedding event, partially by ADAM10, that generates a soluble extracellular form and an intracellular membrane-anchored form, followed by a gamma-secretase cleavage releasing an intracellular fragment. O-fucosylated. Can be elongated to a disaccharide by MFNG. As to expression, in the embryo, expressed in the paraxial mesoderm and nervous system. Expressed at high levels in adult heart and at lower levels, in adult lung. Highly expressed in satellite cells from masseter and tongue than in satellite cells from leg and extraocular muscle.?.

It is found in the apical cell membrane. It localises to the cell junction. The protein localises to the adherens junction. Its subcellular location is the membrane raft. The protein resides in the cell membrane. It is found in the nucleus. Functionally, transmembrane ligand protein of NOTCH1, NOTCH2 and NOTCH3 receptors that binds the extracellular domain (ECD) of Notch receptor in a cis and trans fashion manner. Following transinteraction, ligand cells produce mechanical force that depends of a clathrin-mediated endocytosis, requiring ligand ubiquitination, EPN1 interaction, and actin polymerisation; these events promote Notch receptor extracellular domain (NECD) transendocytosis and triggers Notch signaling through induction of cleavage, hyperphosphorylation, and nuclear accumulation of the intracellular domain of Notch receptors (NICD). Is required for embryonic development and maintenance of adult stem cells in many different tissues and immune systeme; the DLL1-induced Notch signaling is mediated through an intercellular communication that regulates cell lineage, cell specification, cell patterning and morphogenesis through effects on differentiation and proliferation. Plays a role in brain development at different level, namely by regulating neuronal differentiation of neural precursor cells via cell-cell interaction, most likely through the lateral inhibitory system in an endogenous level dependent-manner. During neocortex development, Dll1-Notch signaling transmission is mediated by dynamic interactions between intermediate neurogenic progenitors and radial glia; the cell-cell interactions are mediated via dynamic and transient elongation processes, likely to reactivate/maintain Notch activity in neighboring progenitors, and coordinate progenitor cell division and differentiation across radial and zonal boundaries. During cerebellar development, regulates Bergmann glial monolayer formation and its morphological maturation through a Notch signaling pathway. At the retina and spinal cord level, regulates neurogenesis by preventing the premature differentiation of neural progenitors and also by maintaining progenitors in spinal cord through Notch signaling pathway. Also controls neurogenesis of the neural tube in a progenitor domain-specific fashion along the dorsoventral axis. Maintains quiescence of neural stem cells and plays a role as a fate determinant that segregates asymmetrically to one daughter cell during neural stem cells mitosis, resulting in neuronal differentiation in Dll1-inheriting cell. Plays a role in immune systeme development, namely the development of all T-cells and marginal zone (MZ) B cells. Blocks the differentiation of progenitor cells into the B-cell lineage while promoting the emergence of a population of cells with the characteristics of a T-cell/NK-cell precursor. Upon MMP14 cleavage, negatively regulates Notch signaling in haematopoietic progenitor cells to specifically maintain normal B-cell development in bone marrow. Also plays a role during muscle development. During early development, inhibits myoblasts differentiation from the medial dermomyotomal lip and later regulates progenitor cell differentiation. Directly modulates cell adhesion and basal lamina formation in satellite cells through Notch signaling. Maintains myogenic progenitors pool by suppressing differentiation through down-regulation of MYOD1 and is required for satellite cell homing and PAX7 expression. During craniofacial and trunk myogenesis suppresses differentiation of cranial mesoderm-derived and somite-derived muscle via MYOD1 regulation but in cranial mesoderm-derived progenitors, is neither required for satellite cell homing nor for PAX7 expression. Also plays a role during pancreatic cell development. During type B pancreatic cell development, may be involved in the initiation of proximodistal patterning in the early pancreatic epithelium. Stimulates multipotent pancreatic progenitor cells proliferation and pancreatic growth by maintaining HES1 expression and PTF1A protein levels. During fetal stages of development, is required to maintain arterial identity and the responsiveness of arterial endothelial cells for VEGFA through regulation of KDR activation and NRP1 expression. Controls sprouting angiogenesis and subsequent vertical branch formation through regulation on tip cell differentiation. Negatively regulates goblet cell differentiation in intestine and controls secretory fat commitment through lateral inhibition in small intestine. Plays a role during inner ear development; negatively regulates auditory hair cell differentiation. Plays a role during nephron development through Notch signaling pathway. Regulates growth, blood pressure and energy homeostasis. This Mus musculus (Mouse) protein is Delta-like protein 1 (Dll1).